A 467-amino-acid polypeptide reads, in one-letter code: E3 ubiquitin-protein ligase IE61 (467 aa).

The RING-type zinc finger occupies 19-58 (CTICMSTVSDLGKTMPCLHDFCFVCIRAWTSTSVQCPLCR). Disordered stretches follow at residues 101-171 (GDVI…GVTK), 205-238 (QQPRTGGQDYRDRPVSVGINQDPRTMDRLPFRAT), 344-364 (IVRPETTSTGETSRGDERDTR), and 413-467 (DSAC…MKKS). Polar residues predominate over residues 116–143 (ESIQQPTSRSSREPIQSPNPGPLQSSAR). Residues 149 to 161 (SPSDSQQDSIQPP) show a composition bias toward low complexity. Polar residues predominate over residues 162 to 171 (TRDSSPGVTK). The span at 228 to 238 (RTMDRLPFRAT) shows a compositional bias: basic and acidic residues. 2 stretches are compositionally biased toward low complexity: residues 429–443 (GESNTPSTSGSTSGS) and 450–459 (KSSAGKAGKG).

As to quaternary structure, interacts with host BTRC; this interaction seems to inactivate SCF-mediated protein degradation in general. In terms of processing, auto-ubiquitinated.

The catalysed reaction is S-ubiquitinyl-[E2 ubiquitin-conjugating enzyme]-L-cysteine + [acceptor protein]-L-lysine = [E2 ubiquitin-conjugating enzyme]-L-cysteine + N(6)-ubiquitinyl-[acceptor protein]-L-lysine.. RING-finger E3 ubiquitin ligase that degrades host SP100, one of the major components of ND10 nuclear bodies, thereby disrupting the organization of these bodies. Also plays a role in the inhibition of host NF-kappa-B pathway by blocking the SCF(BTRC)-mediated addition of ubiquitin chains to host I-kappa-B-alpha/NFKBIA, thereby interfering with its degradation. In Varicella-zoster virus (strain Dumas) (HHV-3), this protein is E3 ubiquitin-protein ligase IE61 (61).